A 732-amino-acid polypeptide reads, in one-letter code: X-ray repair cross-complementing protein 5 (732 aa).

A VWFA domain is found at 9–231 (AVVLCMDVGF…DEIYSFSESL (223 aa)). Positions 138–165 (LSSRFSKSQLDIIIHSLKKCDISLQFFL) are leucine-zipper. Lys144 bears the N6-acetyllysine mark. A Glycyl lysine isopeptide (Lys-Gly) (interchain with G-Cter in SUMO2) cross-link involves residue Lys195. The region spanning 253-452 (IGSNLSIRIA…KYAPTEAQLN (200 aa)) is the Ku domain. Phosphoserine occurs at positions 255 and 258. Lys265 carries the N6-acetyllysine modification. Phosphoserine is present on Ser318. Residue Lys332 is modified to N6-acetyllysine. Residues Lys532 and Lys534 each participate in a glycyl lysine isopeptide (Lys-Gly) (interchain with G-Cter in SUMO2) cross-link. Thr535 carries the post-translational modification Phosphothreonine. Residues Lys566 and Lys568 each participate in a glycyl lysine isopeptide (Lys-Gly) (interchain with G-Cter in SUMO2) cross-link. 3 positions are modified to phosphoserine; by PRKDC: Ser577, Ser579, and Ser580. 2 positions are modified to N6-acetyllysine: Lys660 and Lys665. Glycyl lysine isopeptide (Lys-Gly) (interchain with G-Cter in SUMO2) cross-links involve residues Lys669 and Lys688. Residue Thr715 is modified to Phosphothreonine; by PRKDC. The EEXXXDL motif motif lies at 720 to 728 (EEGGDVDDL).

This sequence belongs to the ku80 family. Heterodimer composed of XRCC5/Ku80 and XRCC6/Ku70; heterodimerization stabilizes XRCC5 protein. Component of the core long-range non-homologous end joining (NHEJ) complex (also named DNA-PK complex) composed of PRKDC, LIG4, XRCC4, XRCC6/Ku70, XRCC5/Ku86 and NHEJ1/XLF. Additional component of the NHEJ complex includes PAXX. Following autophosphorylation, PRKDC dissociates from DNA, leading to formation of the short-range NHEJ complex, composed of LIG4, XRCC4, XRCC6/Ku70, XRCC5/Ku86 and NHEJ1/XLF. The XRCC5-XRCC6 dimer also associates with NAA15, and this complex displays DNA binding activity towards the osteocalcin FGF response element (OCFRE). In addition, XRCC5 binds to the osteoblast-specific transcription factors MSX2 and RUNX2. Interacts with ELF3. Interacts with APLF (via KBM motif). The XRCC5/XRCC6 dimer associates in a DNA-dependent manner with APEX1. Identified in a complex with DEAF1 and XRCC6. Interacts with NR4A3; the DNA-dependent protein kinase complex DNA-PK phosphorylates and activates NR4A3 and prevents NR4A3 ubiquitinylation and degradation. Interacts with RNF138. Interacts with CYREN isoform 1 (CYREN-1) and isoform 4 (CYREN-2) (via KBM motif). Interacts with WRN (via KBM motif). Interacts (via N-terminus) with HSF1 (via N-terminus); this interaction is direct and prevents XRCC5/XRCC6 heterodimeric binding and non-homologous end joining (NHEJ) repair activities induced by ionizing radiation (IR). Interacts with DHX9; this interaction occurs in a RNA-dependent manner. Part of the HDP-RNP complex composed of at least HEXIM1, PRKDC, XRCC5, XRCC6, paraspeckle proteins (SFPQ, NONO, PSPC1, RBM14, and MATR3) and NEAT1 RNA. Interacts with ERCC6. The XRCC5-XRCC6 dimer associates with ALKBH2. Interacts with TPRN; TPRN interacts with a number of DNA damage response proteins, is recruited to sites of DNA damage and may play a role in DNA damage repair. Interacts with ERCC6L2. As to quaternary structure, (Microbial infection) Interacts with human T-cell leukemia virus 1/HTLV-1 protein HBZ. Post-translationally, ADP-ribosylated by PARP3. In terms of processing, phosphorylated on serine residues. Phosphorylation by PRKDC may enhance helicase activity. Sumoylated. Post-translationally, ubiquitinated by RNF8 via 'Lys-48'-linked ubiquitination following DNA damage, leading to its degradation and removal from DNA damage sites. Ubiquitinated by RNF138, leading to remove the Ku complex from DNA breaks.

Its subcellular location is the nucleus. It localises to the nucleolus. The protein resides in the chromosome. Functionally, single-stranded DNA-dependent ATP-dependent helicase that plays a key role in DNA non-homologous end joining (NHEJ) by recruiting DNA-PK to DNA. Required for double-strand break repair and V(D)J recombination. Also has a role in chromosome translocation. The DNA helicase II complex binds preferentially to fork-like ends of double-stranded DNA in a cell cycle-dependent manner. It works in the 3'-5' direction. During NHEJ, the XRCC5-XRRC6 dimer performs the recognition step: it recognizes and binds to the broken ends of the DNA and protects them from further resection. Binding to DNA may be mediated by XRCC6. The XRCC5-XRRC6 dimer acts as a regulatory subunit of the DNA-dependent protein kinase complex DNA-PK by increasing the affinity of the catalytic subunit PRKDC to DNA by 100-fold. The XRCC5-XRRC6 dimer is probably involved in stabilizing broken DNA ends and bringing them together. The assembly of the DNA-PK complex to DNA ends is required for the NHEJ ligation step. The XRCC5-XRRC6 dimer probably also acts as a 5'-deoxyribose-5-phosphate lyase (5'-dRP lyase), by catalyzing the beta-elimination of the 5' deoxyribose-5-phosphate at an abasic site near double-strand breaks. XRCC5 probably acts as the catalytic subunit of 5'-dRP activity, and allows to 'clean' the termini of abasic sites, a class of nucleotide damage commonly associated with strand breaks, before such broken ends can be joined. The XRCC5-XRRC6 dimer together with APEX1 acts as a negative regulator of transcription. In association with NAA15, the XRCC5-XRRC6 dimer binds to the osteocalcin promoter and activates osteocalcin expression. As part of the DNA-PK complex, involved in the early steps of ribosome assembly by promoting the processing of precursor rRNA into mature 18S rRNA in the small-subunit processome. Binding to U3 small nucleolar RNA, recruits PRKDC and XRCC5/Ku86 to the small-subunit processome. Plays a role in the regulation of DNA virus-mediated innate immune response by assembling into the HDP-RNP complex, a complex that serves as a platform for IRF3 phosphorylation and subsequent innate immune response activation through the cGAS-STING pathway. The chain is X-ray repair cross-complementing protein 5 (XRCC5) from Homo sapiens (Human).